We begin with the raw amino-acid sequence, 2696 residues long: Protein ILITYHIA (2696 aa).

Residues 1 to 18 show a composition bias toward polar residues; the sequence is MSYSMVNASSAVSSPETA. A disordered region spans residues 1–26; sequence MSYSMVNASSAVSSPETAKNSDEPPP. HEAT repeat units follow at residues 162–204, 253–290, 303–340, 364–400, 401–438, 487–525, 526–562, 564–601, and 642–677; these read DIAP…MKTF, STQA…IYSL, KDSP…DVLN, EFQT…IDLS, KYAL…KSSN, SLSR…RSSV, AIQP…NPDT, SQIS…SKIA, and VVCV…FLLC. Residues 901–941 are disordered; it reads KQEPSSNHSLKKGLASRETANSGRRDTAKLTKKADKGKTAK. Residues 923–941 are compositionally biased toward basic and acidic residues; that stretch reads GRRDTAKLTKKADKGKTAK. HEAT repeat units lie at residues 985 to 1021, 1082 to 1118, 1188 to 1225, 1273 to 1311, 1315 to 1355, 1358 to 1395, 1397 to 1433, 1436 to 1474, 1478 to 1515, 1516 to 1553, 1564 to 1600, 1601 to 1638, 1640 to 1677, 1683 to 1720, 1722 to 1759, 1761 to 1797, 1801 to 1838, and 1840 to 1876; these read HSQL…CTVQ, DTFT…GLQA, HDLG…ESPS, KDLP…KHGK, SLLF…HLAR, PKVH…SKQE, APAL…GFGI, LKKY…KLGK, PYVI…QLSA, YGVK…CAPQ, PKLT…VIKN, PEIS…NSVD, PSLA…LVTE, PYIG…GMGE, NFPD…ALGT, YFEN…SLGA, KYLQ…HHAT, and SLPL…KVAG. Serine 1887 is subject to Phosphoserine. HEAT repeat units follow at residues 1908 to 1945, 1949 to 1986, 1988 to 2024, 2029 to 2066, 2067 to 2102, 2104 to 2137, 2138 to 2175, 2177 to 2213, 2217 to 2254, 2258 to 2292, 2293 to 2330, 2335 to 2373, 2377 to 2414, 2416 to 2450, 2455 to 2492, 2494 to 2530, 2536 to 2573, 2580 to 2617, and 2620 to 2658; these read DKRN…NTPK, EIMP…KLGE, VLPL…SAGR, SFMD…SAGL, QAMD…VRTA, VLPH…AGFN, THLG…VIDE, GVET…SSKL, DEAP…SVPK, PSYI…LCLP, KSLK…VTSE, EFVI…RGGM, PFLP…LSTR, DPLV…HAGK, AVRV…YLEA, QLSV…HNPS, SLFS…KQLA, KVVI…DNPS, and MANI…LTKG.

This sequence belongs to the GCN1 family.

Functionally, involved in immunity against bacterial infection and in non-host resistance. Required for embryo development. Required for systemic acquired resistance, but functions in an salicylic acid-independent manner. Required for bacterium-triggered stomatal closure response. The sequence is that of Protein ILITYHIA from Arabidopsis thaliana (Mouse-ear cress).